The sequence spans 222 residues: Small ribosomal subunit protein eS8z (222 aa).

2 disordered regions span residues 1 to 37 (MGISRDSIHKRRATGGKQKQWRKKRKYEMGRQPANTK) and 125 to 147 (KKKSASSTKKDGEEGEEAAVAAP). The segment covering 8–26 (IHKRRATGGKQKQWRKKRK) has biased composition (basic residues).

It belongs to the eukaryotic ribosomal protein eS8 family.

In Arabidopsis thaliana (Mouse-ear cress), this protein is Small ribosomal subunit protein eS8z (RPS8A).